The primary structure comprises 206 residues: ATP phosphoribosyltransferase (206 aa).

It belongs to the ATP phosphoribosyltransferase family. Short subfamily. Heteromultimer composed of HisG and HisZ subunits.

It localises to the cytoplasm. It carries out the reaction 1-(5-phospho-beta-D-ribosyl)-ATP + diphosphate = 5-phospho-alpha-D-ribose 1-diphosphate + ATP. Its pathway is amino-acid biosynthesis; L-histidine biosynthesis; L-histidine from 5-phospho-alpha-D-ribose 1-diphosphate: step 1/9. Functionally, catalyzes the condensation of ATP and 5-phosphoribose 1-diphosphate to form N'-(5'-phosphoribosyl)-ATP (PR-ATP). Has a crucial role in the pathway because the rate of histidine biosynthesis seems to be controlled primarily by regulation of HisG enzymatic activity. The protein is ATP phosphoribosyltransferase of Sulfurovum sp. (strain NBC37-1).